Reading from the N-terminus, the 416-residue chain is Gamma-glutamyl phosphate reductase (416 aa).

Belongs to the gamma-glutamyl phosphate reductase family.

It localises to the cytoplasm. The enzyme catalyses L-glutamate 5-semialdehyde + phosphate + NADP(+) = L-glutamyl 5-phosphate + NADPH + H(+). It functions in the pathway amino-acid biosynthesis; L-proline biosynthesis; L-glutamate 5-semialdehyde from L-glutamate: step 2/2. In terms of biological role, catalyzes the NADPH-dependent reduction of L-glutamate 5-phosphate into L-glutamate 5-semialdehyde and phosphate. The product spontaneously undergoes cyclization to form 1-pyrroline-5-carboxylate. This Petrotoga mobilis (strain DSM 10674 / SJ95) protein is Gamma-glutamyl phosphate reductase.